We begin with the raw amino-acid sequence, 115 residues long: U3-lycotoxin-Ls1a (115 aa).

Residues 1–20 (MKFVLLFGVLLVTFFSYSSA) form the signal peptide. A propeptide spanning residues 21–44 (EMLDDFDQADEDELLSLIEKGEAR) is cleaved from the precursor. Disulfide bonds link C48–C63, C55–C72, C62–C87, and C74–C85.

This sequence belongs to the neurotoxin 19 (CSTX) family. 01 subfamily. Expressed by the venom gland.

The protein resides in the secreted. The protein is U3-lycotoxin-Ls1a of Lycosa singoriensis (Wolf spider).